The primary structure comprises 526 residues: Outer capsid protein VP5 (526 aa).

The tract at residues 1 to 42 (MGKIIKSLSRFGKKVGNALTSNTAKKIYNTIGKAAERFAESE) is involved in membrane permeabilization.

It belongs to the orbivirus VP5 family.

The protein resides in the virion. VP5 protein is one of the two proteins (with VP2) which constitute the virus particle outer capsid. Acts as a membrane permeabilization protein that mediates release of viral particles from endosomal compartments into the cytoplasm. Permeabilization activity is probably negatively regulated by VP2 and is triggered by endosomal degradation of VP2 and exposure to low pH. The protein is Outer capsid protein VP5 (Segment-6) of Bluetongue virus 13 (isolate USA) (BTV 13).